The primary structure comprises 115 residues: MSNIIKQIEDEQMKQDVPAFRPGDSVEVKVWVVEGSKKRLQAFEGVVIAIRNRGLHSAFTVRKISNGEGVERVFQTHSPVIDSIAVKRRGAVRKAKLYYLRERTGKSARIKERLS.

It belongs to the bacterial ribosomal protein bL19 family.

In terms of biological role, this protein is located at the 30S-50S ribosomal subunit interface and may play a role in the structure and function of the aminoacyl-tRNA binding site. The chain is Large ribosomal subunit protein bL19 from Pectobacterium atrosepticum (strain SCRI 1043 / ATCC BAA-672) (Erwinia carotovora subsp. atroseptica).